We begin with the raw amino-acid sequence, 275 residues long: Phenylalanine-4-hydroxylase (275 aa).

3 residues coordinate Fe cation: histidine 135, histidine 140, and glutamate 181.

Belongs to the biopterin-dependent aromatic amino acid hydroxylase family. Requires Fe(2+) as cofactor.

It carries out the reaction (6R)-L-erythro-5,6,7,8-tetrahydrobiopterin + L-phenylalanine + O2 = (4aS,6R)-4a-hydroxy-L-erythro-5,6,7,8-tetrahydrobiopterin + L-tyrosine. The protein operates within amino-acid degradation; L-phenylalanine degradation; acetoacetate and fumarate from L-phenylalanine: step 1/6. In Mesorhizobium japonicum (strain LMG 29417 / CECT 9101 / MAFF 303099) (Mesorhizobium loti (strain MAFF 303099)), this protein is Phenylalanine-4-hydroxylase (phhA).